A 167-amino-acid polypeptide reads, in one-letter code: Leptin (167 aa).

The N-terminal stretch at 1-21 is a signal peptide; sequence MHWGTLCGFLWLWPYLFYVQA. Cysteines 117 and 167 form a disulfide.

This sequence belongs to the leptin family. In terms of assembly, interacts with SIGLEC6. Adipose tissue is the main source of leptin. It is also produced by other peripheral tissues such as the skeletal muscle. Expressed by intercalated and striated tracts of submandibular and parotid salivary gland intralobular ducts. Detected by fundic epithelium of the gastric mucosa. Secreted into blood and gastric juice.

The protein resides in the secreted. Key player in the regulation of energy balance and body weight control. Once released into the circulation, has central and peripheral effects by binding LEPR, found in many tissues, which results in the activation of several major signaling pathways. In the hypothalamus, acts as an appetite-regulating factor that induces a decrease in food intake and an increase in energy consumption by inducing anorexinogenic factors and suppressing orexigenic neuropeptides, also regulates bone mass and secretion of hypothalamo-pituitary-adrenal hormones. In the periphery, increases basal metabolism, influences reproductive function, regulates pancreatic beta-cell function and insulin secretion, is pro-angiogenic for endothelial cell and affects innate and adaptive immunity. In the arcuate nucleus of the hypothalamus, activates by depolarization POMC neurons inducing FOS and SOCS3 expression to release anorexigenic peptides and inhibits by hyperpolarization NPY neurons inducing SOCS3 with a consequent reduction on release of orexigenic peptides. In addition to its known satiety inducing effect, has a modulatory role in nutrient absorption. In the intestine, reduces glucose absorption by enterocytes by activating PKC and leading to a sequential activation of p38, PI3K and ERK signaling pathways which exerts an inhibitory effect on glucose absorption. Acts as a growth factor on certain tissues, through the activation of different signaling pathways increases expression of genes involved in cell cycle regulation such as CCND1, via JAK2-STAT3 pathway, or VEGFA, via MAPK1/3 and PI3K-AKT1 pathways. May also play an apoptotic role via JAK2-STAT3 pathway and up-regulation of BIRC5 expression. Pro-angiogenic, has mitogenic activity on vascular endothelial cells and plays a role in matrix remodeling by regulating the expression of matrix metalloproteinases (MMPs) and tissue inhibitors of metalloproteinases (TIMPs). In innate immunity, modulates the activity and function of neutrophils by increasing chemotaxis and the secretion of oxygen radicals. Increases phagocytosis by macrophages and enhances secretion of pro-inflammatory mediators. Increases cytotoxic ability of NK cells. Plays a pro-inflammatory role, in synergy with IL1B, by inducing NOS2 which promotes the production of IL6, IL8 and Prostaglandin E2, through a signaling pathway that involves JAK2, PI3K, MAP2K1/MEK1 and MAPK14/p38. In adaptive immunity, promotes the switch of memory T-cells towards T helper-1 cell immune responses. Increases CD4(+)CD25(-) T-cell proliferation and reduces autophagy during TCR (T-cell receptor) stimulation, through MTOR signaling pathway activation and BCL2 up-regulation. In Homo sapiens (Human), this protein is Leptin.